We begin with the raw amino-acid sequence, 146 residues long: Late protein OPG112 (146 aa).

Residues leucine 10–phenylalanine 32 traverse the membrane as a helical segment.

Belongs to the orthopoxvirus OPG112 family.

Its subcellular location is the host membrane. It localises to the host cytoplasm. In terms of biological role, contributes to the formation of crescents and immature virions (IV). Interacts with phosphatidylinositol-3-phosphate (PI3P) and phosphatidylinositol-4-phosphate (PI4P) lipids in order to form virion membranes. Mechanistically, mediates proper formation of OPG125-hexamers, and hence the honey comb lattice and spherical immature virus. The sequence is that of Late protein OPG112 (OPG112) from Bos taurus (Bovine).